Here is a 149-residue protein sequence, read N- to C-terminus: D-aminoacyl-tRNA deacylase (149 aa).

A Gly-cisPro motif, important for rejection of L-amino acids motif is present at residues 137 to 138 (GP).

It belongs to the DTD family. In terms of assembly, homodimer.

It localises to the cytoplasm. It catalyses the reaction glycyl-tRNA(Ala) + H2O = tRNA(Ala) + glycine + H(+). The catalysed reaction is a D-aminoacyl-tRNA + H2O = a tRNA + a D-alpha-amino acid + H(+). Its function is as follows. An aminoacyl-tRNA editing enzyme that deacylates mischarged D-aminoacyl-tRNAs. Also deacylates mischarged glycyl-tRNA(Ala), protecting cells against glycine mischarging by AlaRS. Acts via tRNA-based rather than protein-based catalysis; rejects L-amino acids rather than detecting D-amino acids in the active site. By recycling D-aminoacyl-tRNA to D-amino acids and free tRNA molecules, this enzyme counteracts the toxicity associated with the formation of D-aminoacyl-tRNA entities in vivo and helps enforce protein L-homochirality. The polypeptide is D-aminoacyl-tRNA deacylase (Syntrophotalea carbinolica (strain DSM 2380 / NBRC 103641 / GraBd1) (Pelobacter carbinolicus)).